Consider the following 123-residue polypeptide: Large ribosomal subunit protein bL12 (123 aa).

This sequence belongs to the bacterial ribosomal protein bL12 family. In terms of assembly, homodimer. Part of the ribosomal stalk of the 50S ribosomal subunit. Forms a multimeric L10(L12)X complex, where L10 forms an elongated spine to which 2 to 4 L12 dimers bind in a sequential fashion. Binds GTP-bound translation factors.

Functionally, forms part of the ribosomal stalk which helps the ribosome interact with GTP-bound translation factors. Is thus essential for accurate translation. The polypeptide is Large ribosomal subunit protein bL12 (Marinomonas sp. (strain MWYL1)).